We begin with the raw amino-acid sequence, 463 residues long: Asparagine--tRNA ligase (463 aa).

This sequence belongs to the class-II aminoacyl-tRNA synthetase family. Homodimer.

It localises to the cytoplasm. The catalysed reaction is tRNA(Asn) + L-asparagine + ATP = L-asparaginyl-tRNA(Asn) + AMP + diphosphate + H(+). The sequence is that of Asparagine--tRNA ligase from Desulfitobacterium hafniense (strain Y51).